A 576-amino-acid chain; its full sequence is uncharacterized protein (576 aa).

The first 28 residues, 1–28, serve as a signal peptide directing secretion; it reads MLRLNGLRVLLRTLAAIGALLTTASASA. The active-site Acyl-ester intermediate is S185. Cystine bridges form between C252–C269 and C278–C286. Ca(2+)-binding residues include D253, D256, D260, and V262. Active-site charge relay system residues include D414 and H464. An intrachain disulfide couples C529 to C551.

This sequence belongs to the tannase family.

This is an uncharacterized protein from Xanthomonas campestris pv. campestris (strain ATCC 33913 / DSM 3586 / NCPPB 528 / LMG 568 / P 25).